The chain runs to 253 residues: 5'/3'-nucleotidase SurE (253 aa).

Residues aspartate 8, aspartate 9, serine 39, and asparagine 92 each contribute to the a divalent metal cation site.

Belongs to the SurE nucleotidase family. A divalent metal cation is required as a cofactor.

It is found in the cytoplasm. The enzyme catalyses a ribonucleoside 5'-phosphate + H2O = a ribonucleoside + phosphate. The catalysed reaction is a ribonucleoside 3'-phosphate + H2O = a ribonucleoside + phosphate. It carries out the reaction [phosphate](n) + H2O = [phosphate](n-1) + phosphate + H(+). Nucleotidase with a broad substrate specificity as it can dephosphorylate various ribo- and deoxyribonucleoside 5'-monophosphates and ribonucleoside 3'-monophosphates with highest affinity to 3'-AMP. Also hydrolyzes polyphosphate (exopolyphosphatase activity) with the preference for short-chain-length substrates (P20-25). Might be involved in the regulation of dNTP and NTP pools, and in the turnover of 3'-mononucleotides produced by numerous intracellular RNases (T1, T2, and F) during the degradation of various RNAs. The protein is 5'/3'-nucleotidase SurE of Salmonella paratyphi B (strain ATCC BAA-1250 / SPB7).